The following is a 60-amino-acid chain: Potassium channel toxin alpha-KTx 15.8 (60 aa).

The signal sequence occupies residues 1–22 (MKFSSIILLTLLICSMSIFGNC). Glutamine 23 carries the pyrrolidone carboxylic acid modification. Cystine bridges form between cysteine 30/cysteine 50, cysteine 35/cysteine 55, and cysteine 39/cysteine 57.

The protein belongs to the short scorpion toxin superfamily. Potassium channel inhibitor family. Alpha-KTx 15 subfamily. Expressed by the venom gland.

The protein localises to the secreted. In terms of biological role, blocker of A-type voltage-gated potassium channels of cerebellar granular cells. May also inhibit Kv4/KCND when coexpressed with DPP6 or DPP10. The occlusion of the outer entry of the K(+) conducting pore is partially reversible and affects both open and closed channels. It shares the same target in rat brain than BmTX3 (AC Q8I0L5) and AmmTX3 (AC P60208). Also shows a weak inhibition on Kv1.2/KCNA2 and Kv1.3/KCNA3 voltage-gated potassium channels. This is Potassium channel toxin alpha-KTx 15.8 from Olivierus martensii (Manchurian scorpion).